Consider the following 492-residue polypeptide: 5-taurinomethyluridine-[tRNA] synthase subunit GTPB3, mitochondrial (492 aa).

The N-terminal 20 residues, 1 to 20 (MWRGLSALVTQAAWAPLRLC), are a transit peptide targeting the mitochondrion. The 5,10-methylenetetrahydrofolate site is built by R52, E112, and K152. Positions 249–416 (GANVVVTGPP…LLQALKTELA (168 aa)) constitute a TrmE-type G domain. GTP contacts are provided by residues 256 to 263 (GPPNAGKS), 282 to 286 (GTTRD), 303 to 306 (DTAG), and 374 to 377 (NKSD). N259 is a K(+) binding site. The Mg(2+) site is built by S263 and T284. K492 contributes to the 5,10-methylenetetrahydrofolate binding site.

Belongs to the TRAFAC class TrmE-Era-EngA-EngB-Septin-like GTPase superfamily. TrmE GTPase family. In terms of assembly, homodimer; forms a dimer in the presence of potassium. Interacts with MTO1; forms the GTPBP3-MTO1 complex composed of homodimers of GTPBP3 and MTO1. Requires K(+) as cofactor. Ubiquitously expressed. Highly expressed in tissues with high metabolic rates including heart, liver and brain. Weakly expressed in skeletal muscle.

It is found in the mitochondrion. It carries out the reaction GTP + H2O = GDP + phosphate + H(+). GTPase component of the GTPBP3-MTO1 complex that catalyzes the 5-taurinomethyluridine (taum(5)U) modification at the 34th wobble position (U34) of mitochondrial tRNAs (mt-tRNAs), which plays a role in mt-tRNA decoding and mitochondrial translation. Taum(5)U formation on mammalian mt-tRNA requires the presence of both GTPBP3-mediated GTPase activity and MTO1 catalytic activity. The polypeptide is 5-taurinomethyluridine-[tRNA] synthase subunit GTPB3, mitochondrial (Mus musculus (Mouse)).